The primary structure comprises 388 residues: Processive diacylglycerol beta-glucosyltransferase (388 aa).

Belongs to the glycosyltransferase 28 family. UgtP subfamily.

The protein localises to the cell membrane. It carries out the reaction a 1,2-diacyl-3-O-(beta-D-glucopyranosyl)-sn-glycerol + UDP-alpha-D-glucose = a 1,2-diacyl-3-O-(beta-D-Glc-(1-&gt;6)-beta-D-Glc)-sn-glycerol + UDP + H(+). It catalyses the reaction a 1,2-diacyl-3-O-(beta-D-Glc-(1-&gt;6)-beta-D-Glc)-sn-glycerol + UDP-alpha-D-glucose = a 1,2-diacyl-3-O-(beta-D-Glc-(1-&gt;6)-beta-D-Glc-(1-&gt;6)-beta-D-Glc)-sn-glycerol + UDP + H(+). The enzyme catalyses a 1,2-diacyl-sn-glycerol + UDP-alpha-D-glucose = a 1,2-diacyl-3-O-(beta-D-glucopyranosyl)-sn-glycerol + UDP + H(+). The protein operates within glycolipid metabolism; diglucosyl-diacylglycerol biosynthesis. Functionally, processive glucosyltransferase involved in the biosynthesis of both the bilayer- and non-bilayer-forming membrane glucolipids. Is able to successively transfer up to three glucosyl residues to diacylglycerol (DAG), thereby catalyzing the formation of beta-monoglucosyl-DAG (3-O-(beta-D-glucopyranosyl)-1,2-diacyl-sn-glycerol), beta-diglucosyl-DAG (3-O-(beta-D-glucopyranosyl-beta-(1-&gt;6)-D-glucopyranosyl)-1,2-diacyl-sn-glycerol) and beta-triglucosyl-DAG (3-O-(beta-D-glucopyranosyl-beta-(1-&gt;6)-D-glucopyranosyl-beta-(1-&gt;6)-D-glucopyranosyl)-1,2-diacyl-sn-glycerol). Beta-diglucosyl-DAG is the predominant glycolipid found in Bacillales and is also used as a membrane anchor for lipoteichoic acid (LTA). This Bacillus cereus (strain ATCC 10987 / NRS 248) protein is Processive diacylglycerol beta-glucosyltransferase.